Consider the following 497-residue polypeptide: UDP-N-acetylmuramoyl-L-alanyl-D-glutamate--2,6-diaminopimelate ligase (497 aa).

Leucine 27 and serine 29 together coordinate UDP-N-acetyl-alpha-D-muramoyl-L-alanyl-D-glutamate. Residue 116–122 (GTNGKTT) coordinates ATP. UDP-N-acetyl-alpha-D-muramoyl-L-alanyl-D-glutamate contacts are provided by residues asparagine 157, 158-159 (TT), serine 185, glutamine 191, and arginine 193. An N6-carboxylysine modification is found at lysine 225. Residues arginine 392, 416–419 (DNPR), glycine 467, and glutamate 471 each bind meso-2,6-diaminopimelate. Positions 416–419 (DNPR) match the Meso-diaminopimelate recognition motif motif.

The protein belongs to the MurCDEF family. MurE subfamily. Mg(2+) serves as cofactor. In terms of processing, carboxylation is probably crucial for Mg(2+) binding and, consequently, for the gamma-phosphate positioning of ATP.

The protein localises to the cytoplasm. The catalysed reaction is UDP-N-acetyl-alpha-D-muramoyl-L-alanyl-D-glutamate + meso-2,6-diaminopimelate + ATP = UDP-N-acetyl-alpha-D-muramoyl-L-alanyl-gamma-D-glutamyl-meso-2,6-diaminopimelate + ADP + phosphate + H(+). It participates in cell wall biogenesis; peptidoglycan biosynthesis. Its function is as follows. Catalyzes the addition of meso-diaminopimelic acid to the nucleotide precursor UDP-N-acetylmuramoyl-L-alanyl-D-glutamate (UMAG) in the biosynthesis of bacterial cell-wall peptidoglycan. This chain is UDP-N-acetylmuramoyl-L-alanyl-D-glutamate--2,6-diaminopimelate ligase, found in Buchnera aphidicola subsp. Schizaphis graminum (strain Sg).